The primary structure comprises 254 residues: 5'/3'-nucleotidase SurE (254 aa).

A divalent metal cation-binding residues include D8, D9, S39, and N92.

This sequence belongs to the SurE nucleotidase family. The cofactor is a divalent metal cation.

It is found in the cytoplasm. It catalyses the reaction a ribonucleoside 5'-phosphate + H2O = a ribonucleoside + phosphate. The enzyme catalyses a ribonucleoside 3'-phosphate + H2O = a ribonucleoside + phosphate. The catalysed reaction is [phosphate](n) + H2O = [phosphate](n-1) + phosphate + H(+). Nucleotidase with a broad substrate specificity as it can dephosphorylate various ribo- and deoxyribonucleoside 5'-monophosphates and ribonucleoside 3'-monophosphates with highest affinity to 3'-AMP. Also hydrolyzes polyphosphate (exopolyphosphatase activity) with the preference for short-chain-length substrates (P20-25). Might be involved in the regulation of dNTP and NTP pools, and in the turnover of 3'-mononucleotides produced by numerous intracellular RNases (T1, T2, and F) during the degradation of various RNAs. The sequence is that of 5'/3'-nucleotidase SurE from Edwardsiella ictaluri (strain 93-146).